The chain runs to 156 residues: Phytohormone-binding protein (156 aa).

Residues Gln-22, Gln-68, and Thr-141 each contribute to the gibberellin A3 site.

The protein belongs to the BetVI family.

In terms of biological role, binds gibberellin A3 (GA3) in vitro. The protein is Phytohormone-binding protein of Medicago truncatula (Barrel medic).